A 666-amino-acid chain; its full sequence is DNA ligase (666 aa).

NAD(+)-binding positions include 34-38 (DAEYD), 83-84 (SL), and E114. K116 functions as the N6-AMP-lysine intermediate in the catalytic mechanism. Residues R137, E171, K286, and K310 each coordinate NAD(+). Residues C404, C407, C422, and C427 each contribute to the Zn(2+) site. The BRCT domain maps to 588-666 (NTESTISEKS…EEFFAILKGE (79 aa)).

It belongs to the NAD-dependent DNA ligase family. LigA subfamily. It depends on Mg(2+) as a cofactor. Requires Mn(2+) as cofactor.

It catalyses the reaction NAD(+) + (deoxyribonucleotide)n-3'-hydroxyl + 5'-phospho-(deoxyribonucleotide)m = (deoxyribonucleotide)n+m + AMP + beta-nicotinamide D-nucleotide.. Its function is as follows. DNA ligase that catalyzes the formation of phosphodiester linkages between 5'-phosphoryl and 3'-hydroxyl groups in double-stranded DNA using NAD as a coenzyme and as the energy source for the reaction. It is essential for DNA replication and repair of damaged DNA. This is DNA ligase from Mesoplasma florum (strain ATCC 33453 / NBRC 100688 / NCTC 11704 / L1) (Acholeplasma florum).